The following is an 872-amino-acid chain: UPF0182 protein Noc_0961 (872 aa).

7 consecutive transmembrane segments (helical) span residues 8–28 (FLILGLSIVVLAVFLLIAGFE), 56–76 (LVVFIQVSIVFFLIFFVNFWV), 109–129 (SLWIYTPLSLVLSIIIAWPLF), 159–179 (LFSFPIYVLILQRLLISFLLL), 207–227 (WHLSILVLMVFFIEIWDFFLQ), 254–274 (PFIWLSMFFLLGIAFFLLLFI), and 282–302 (TLAVFSLLFILSLGARHFHFL).

This sequence belongs to the UPF0182 family.

It is found in the cell membrane. The chain is UPF0182 protein Noc_0961 from Nitrosococcus oceani (strain ATCC 19707 / BCRC 17464 / JCM 30415 / NCIMB 11848 / C-107).